We begin with the raw amino-acid sequence, 174 residues long: Large ribosomal subunit protein uL15 (174 aa).

2 disordered regions span residues Met-1–Arg-56 and Val-150–Ala-174. Gly residues predominate over residues Arg-21 to Met-35.

The protein belongs to the universal ribosomal protein uL15 family. As to quaternary structure, part of the 50S ribosomal subunit.

In terms of biological role, binds to the 23S rRNA. The chain is Large ribosomal subunit protein uL15 from Roseiflexus castenholzii (strain DSM 13941 / HLO8).